The primary structure comprises 215 residues: Thiamine-phosphate synthase 1 (215 aa).

4-amino-2-methyl-5-(diphosphooxymethyl)pyrimidine-binding positions include 35-39 and Asn67; that span reads QYRFE. 2 residues coordinate Mg(2+): Asp68 and Asp87. Thr106 serves as a coordination point for 4-amino-2-methyl-5-(diphosphooxymethyl)pyrimidine. 132–134 is a binding site for 2-[(2R,5Z)-2-carboxy-4-methylthiazol-5(2H)-ylidene]ethyl phosphate; that stretch reads TST. 4-amino-2-methyl-5-(diphosphooxymethyl)pyrimidine is bound at residue Lys135. Gly162 is a 2-[(2R,5Z)-2-carboxy-4-methylthiazol-5(2H)-ylidene]ethyl phosphate binding site.

The protein belongs to the thiamine-phosphate synthase family. Requires Mg(2+) as cofactor.

It carries out the reaction 2-[(2R,5Z)-2-carboxy-4-methylthiazol-5(2H)-ylidene]ethyl phosphate + 4-amino-2-methyl-5-(diphosphooxymethyl)pyrimidine + 2 H(+) = thiamine phosphate + CO2 + diphosphate. The enzyme catalyses 2-(2-carboxy-4-methylthiazol-5-yl)ethyl phosphate + 4-amino-2-methyl-5-(diphosphooxymethyl)pyrimidine + 2 H(+) = thiamine phosphate + CO2 + diphosphate. It catalyses the reaction 4-methyl-5-(2-phosphooxyethyl)-thiazole + 4-amino-2-methyl-5-(diphosphooxymethyl)pyrimidine + H(+) = thiamine phosphate + diphosphate. It participates in cofactor biosynthesis; thiamine diphosphate biosynthesis; thiamine phosphate from 4-amino-2-methyl-5-diphosphomethylpyrimidine and 4-methyl-5-(2-phosphoethyl)-thiazole: step 1/1. In terms of biological role, condenses 4-methyl-5-(beta-hydroxyethyl)thiazole monophosphate (THZ-P) and 2-methyl-4-amino-5-hydroxymethyl pyrimidine pyrophosphate (HMP-PP) to form thiamine monophosphate (TMP). In Aquifex aeolicus (strain VF5), this protein is Thiamine-phosphate synthase 1.